Here is a 142-residue protein sequence, read N- to C-terminus: Large ribosomal subunit protein bL21 (142 aa).

Residues 74-84 (RRRQNSKRTRG) show a composition bias toward basic residues. The tract at residues 74–142 (RRRQNSKRTR…KAATKAESAE (69 aa)) is disordered. A compositionally biased stretch (basic and acidic residues) spans 107 to 125 (KAAEKKAPKADAAEGEAAK). A compositionally biased stretch (basic residues) spans 126–135 (PKKAAPKKAA).

This sequence belongs to the bacterial ribosomal protein bL21 family. Part of the 50S ribosomal subunit. Contacts protein L20.

Its function is as follows. This protein binds to 23S rRNA in the presence of protein L20. This is Large ribosomal subunit protein bL21 from Brucella abortus (strain S19).